Here is a 224-residue protein sequence, read N- to C-terminus: Deoxyribose-phosphate aldolase (224 aa).

D92 serves as the catalytic Proton donor/acceptor. K155 serves as the catalytic Schiff-base intermediate with acetaldehyde. The active-site Proton donor/acceptor is K184.

The protein belongs to the DeoC/FbaB aldolase family. DeoC type 1 subfamily.

The protein resides in the cytoplasm. The catalysed reaction is 2-deoxy-D-ribose 5-phosphate = D-glyceraldehyde 3-phosphate + acetaldehyde. Its pathway is carbohydrate degradation; 2-deoxy-D-ribose 1-phosphate degradation; D-glyceraldehyde 3-phosphate and acetaldehyde from 2-deoxy-alpha-D-ribose 1-phosphate: step 2/2. Catalyzes a reversible aldol reaction between acetaldehyde and D-glyceraldehyde 3-phosphate to generate 2-deoxy-D-ribose 5-phosphate. In Shouchella clausii (strain KSM-K16) (Alkalihalobacillus clausii), this protein is Deoxyribose-phosphate aldolase.